We begin with the raw amino-acid sequence, 418 residues long: rRNA methyltransferase 3, mitochondrial (418 aa).

The transit peptide at 1 to 40 (MAAPAKGMWCSLGSLLRVVQTRDLNARRWVRALRRSPVRV) directs the protein to the mitochondrion. Residues 41-90 (LSPSGQVEERKRAPDQQPRKAVPKASSQGQRQKQPLETSPSQTPHTWEEA) form a disordered region. The span at 47 to 58 (VEERKRAPDQQP) shows a compositional bias: basic and acidic residues. Positions 65–85 (ASSQGQRQKQPLETSPSQTPH) are enriched in polar residues. Residues Gly-354, Ile-378, and Leu-387 each coordinate S-adenosyl-L-methionine.

Belongs to the class IV-like SAM-binding methyltransferase superfamily. RNA methyltransferase TrmH family.

The protein localises to the mitochondrion. The catalysed reaction is guanosine(1370) in 16S rRNA + S-adenosyl-L-methionine = 2'-O-methylguanosine(1370) in 16S rRNA + S-adenosyl-L-homocysteine + H(+). S-adenosyl-L-methionine-dependent 2'-O-ribose methyltransferase that catalyzes the formation of 2'-O-methylguanosine at position 1370 (Gm1370) in the 16S mitochondrial large subunit ribosomal RNA (mtLSU rRNA), a conserved modification in the peptidyl transferase domain of the mtLSU rRNA. Also required for formation of 2'-O-methyluridine at position 1369 (Um1369) mediated by MRM2. This is rRNA methyltransferase 3, mitochondrial from Mus musculus (Mouse).